A 395-amino-acid polypeptide reads, in one-letter code: Acetate kinase (395 aa).

Mg(2+) is bound at residue Asn-7. Lys-14 lines the ATP pocket. Substrate is bound at residue Arg-85. The active-site Proton donor/acceptor is Asp-142. ATP-binding positions include 202–206 (HLGNG), 277–279 (DMR), and 325–329 (GIGEN). Glu-378 provides a ligand contact to Mg(2+).

It belongs to the acetokinase family. In terms of assembly, homodimer. Requires Mg(2+) as cofactor. Mn(2+) serves as cofactor.

The protein resides in the cytoplasm. The enzyme catalyses acetate + ATP = acetyl phosphate + ADP. The protein operates within metabolic intermediate biosynthesis; acetyl-CoA biosynthesis; acetyl-CoA from acetate: step 1/2. Functionally, catalyzes the formation of acetyl phosphate from acetate and ATP. Can also catalyze the reverse reaction. This chain is Acetate kinase, found in Deinococcus geothermalis (strain DSM 11300 / CIP 105573 / AG-3a).